We begin with the raw amino-acid sequence, 2262 residues long: Klarsicht protein (2262 aa).

Disordered regions lie at residues 1-140 (MEMQ…VGND), 345-410 (QQQQ…GEGN), 442-475 (AANGLDDDEDEEEDTEDDSFGYEGEATEDDLNEV), 514-561 (QSQS…PDIG), 800-832 (ATSSVDGLQSTAVSSTTATGGPLPPSDDSDKEN), 859-898 (SNYDSSSACSSSNSNSNSNSNSNGRLTETSATSRVTQLQM), 1000-1031 (HLPPRSPAKSAKSTKSQASNATVSGSTLVSPV), 1115-1157 (PSCK…SEGF), 1246-1316 (SGLA…ELGG), and 1533-1670 (VRRK…QQSR). The tract at residues 1–1774 (MEMQQENETG…KPTPELLDTE (1774 aa)) is required for apical microtubules localization. The Cytoplasmic segment spans residues 1–2215 (MEMQQENETG…KRGWAWRIAR (2215 aa)). The segment covering 58–67 (KIEHTTKPLK) has biased composition (basic and acidic residues). Residues 131-140 (NYGTNSVGND) show a composition bias toward polar residues. A compositionally biased stretch (low complexity) spans 345–402 (QQQQLSSQQPASLTSNCSSESTSESATKSSSLSSGFASDPVTTPIGTAAAAPPSSSTH). Positions 446-475 (LDDDEDEEEDTEDDSFGYEGEATEDDLNEV) are enriched in acidic residues. Low complexity predominate over residues 514-525 (QSQSRSQQVPSQ). Over residues 546 to 560 (EADEELEEEDEDPDI) the composition is skewed to acidic residues. 2 stretches are compositionally biased toward low complexity: residues 809-818 (STAVSSTTAT) and 859-881 (SNYDSSSACSSSNSNSNSNSNSN). Residues 882 to 894 (GRLTETSATSRVT) show a composition bias toward polar residues. Residues 1006–1018 (PAKSAKSTKSQAS) show a composition bias toward low complexity. The span at 1019–1028 (NATVSGSTLV) shows a compositional bias: polar residues. Residues 1246–1259 (SGLASHSISESALD) show a composition bias toward polar residues. Positions 1267–1280 (PRAASSSGTGSNAA) are enriched in low complexity. Over residues 1288-1299 (SLRRRKARKKRI) the composition is skewed to basic residues. A compositionally biased stretch (low complexity) spans 1550-1559 (QSDQQQQQLQ). Positions 1560 to 1583 (VTPSLSASATALMTTPKNQSTSHQ) are enriched in polar residues. Basic and acidic residues-rich tracts occupy residues 1586–1596 (HRAESVGRKLD) and 1610–1640 (RTSESDTSTRRRRTVTADERRRSSRNLEKCI). Residues 1809–1842 (LTKQERRLQSALEEQEQQQESEQLKQQKLVEEEK) are a coiled coil. The segment at 2092 to 2205 (HQQKQQIQQN…GEGADPAQTS (114 aa)) is disordered. Over residues 2093–2105 (QQKQQIQQNQTQQ) the composition is skewed to low complexity. The span at 2130–2142 (RRGKGARKARQAK) shows a compositional bias: basic residues. The 56-residue stretch at 2207–2262 (RGWAWRIARAAVPMQVALFTIFCAACLMQPNCCDNLNNLSMSFTPQLRYIRGPPPI) folds into the KASH domain. Residues 2216 to 2236 (AAVPMQVALFTIFCAACLMQP) form a helical; Anchor for type IV membrane protein membrane-spanning segment. Residues 2237–2262 (NCCDNLNNLSMSFTPQLRYIRGPPPI) lie on the Perinuclear space side of the membrane.

It belongs to the nesprin family. In terms of assembly, core component of LINC complexes which are composed of inner nuclear membrane SUN domain-containing proteins coupled to outer nuclear membrane KASH domain-containing nesprins. Interacts with kud. Interacts with Msp300; this interaction allows the anchoring of Msp300 nuclear ring structure to the nuclear envelope. As to expression, expressed ubiquitously in the eye disk, but at much higher levels posterior to the morphogenetic furrow. Expressed in R-cells and also in non-neural cone cells.

It localises to the cytoplasm. The protein resides in the cytoskeleton. Its subcellular location is the microtubule organizing center. The protein localises to the perinuclear region. It is found in the nucleus membrane. It localises to the nucleus envelope. Functionally, component of the LINC (LInker of Nucleoskeleton and Cytoskeleton) complex involved in the connection between the nuclear lamina and the cytoskeleton. Plays a role in the nuclear positioning and links the nucleus to the microtubule organizing center (MTOC). Collaborates with Klar to promote even spacing of the myonuclei at the periphery of striated muscle fibers by mediating a tight association between a nuclear ring structure of Msp300 and the plus ends of a unique astral microtubule (MT) network. In Drosophila melanogaster (Fruit fly), this protein is Klarsicht protein.